A 1114-amino-acid polypeptide reads, in one-letter code: Proto-oncogene tyrosine-protein kinase receptor Ret (1114 aa).

Residues 1 to 28 (MAKATSGAAGLRLLLLLLLPLLGKVALG) form the signal peptide. The tract at residues 29 to 153 (LYFSRDAYWE…RVYFSFFNTS (125 aa)) is cadherin-like region 1 (CLD1). The Extracellular portion of the chain corresponds to 29-635 (LYFSRDAYWE…QDPLCDELCR (607 aa)). N-linked (GlcNAc...) asparagine glycosylation occurs at Asn-98. Residues Cys-137 and Cys-142 are joined by a disulfide bond. N-linked (GlcNAc...) asparagine glycosylation is present at Asn-151. 2 cysteine pairs are disulfide-bonded: Cys-157–Cys-197 and Cys-166–Cys-243. The 105-residue stretch at 168–272 (PETRPSFRIR…YDEDDSAPTF (105 aa)) folds into the Cadherin domain. Glu-178 and Asn-179 together coordinate Ca(2+). The N-linked (GlcNAc...) asparagine glycan is linked to Asn-199. Residues Asp-230, Glu-232, Asp-264, Glu-265, Asp-266, Asp-267, Ser-268, Asp-300, and Asp-302 each contribute to the Ca(2+) site. The segment at 265 to 379 (EDDSAPTFPA…MQLAVLVNDS (115 aa)) is cadherin-like region 3 (CLD3). Asn-336, Asn-343, Asn-361, Asn-367, and Asn-377 each carry an N-linked (GlcNAc...) asparagine glycan. Asp-378 serves as a coordination point for Ca(2+). The N-linked (GlcNAc...) asparagine glycan is linked to Asn-394. A cadherin-like region 4 (CLD4) region spans residues 405 to 506 (PSTYSLSVSR…QAQLLVTVEG (102 aa)). Cys-426 and Cys-430 are joined by a disulfide. Residues Asn-448 and Asn-468 are each glycosylated (N-linked (GlcNAc...) asparagine). 4 disulfides stabilise this stretch: Cys-449–Cys-478, Cys-515–Cys-531, Cys-519–Cys-541, and Cys-528–Cys-558. N-linked (GlcNAc...) asparagine glycosylation is present at Asn-554. Residues Thr-564, Cys-565, Asp-567, His-569, Glu-574, and Asp-584 each contribute to the Ca(2+) site. 5 disulfide bridges follow: Cys-565–Cys-581, Cys-570–Cys-585, Cys-609–Cys-620, Cys-611–Cys-618, and Cys-630–Cys-634. A helical transmembrane segment spans residues 636–657 (TVIAAAVLFSFIVSVLLSAFCI). The Cytoplasmic portion of the chain corresponds to 658–1114 (HCYHKFAHKP…AAKLMDTFDS (457 aa)). Residue Tyr-687 is modified to Phosphotyrosine; by autocatalysis. A glycan (O-linked (GlcNAc) serine) is linked at Ser-688. Ser-696 carries the phosphoserine modification. A Protein kinase domain is found at 724–1016 (LVLGKTLGEG…KMMVKRRDYL (293 aa)). Residues 730–738 (LGEGEFGKV) and Lys-758 contribute to the ATP site. 805–807 (EYA) serves as a coordination point for semaxanib. A phosphotyrosine; by autocatalysis mark is found at Tyr-806, Tyr-809, and Tyr-826. Residue Asp-874 is the Proton acceptor of the active site. A phosphotyrosine; by autocatalysis mark is found at Tyr-900, Tyr-905, Tyr-981, Tyr-1015, Tyr-1029, Tyr-1062, Tyr-1090, and Tyr-1096.

This sequence belongs to the protein kinase superfamily. Tyr protein kinase family. As to quaternary structure, phosphorylated form interacts with the PBT domain of DOK2, DOK4 and DOK5. The phosphorylated form interacts with PLCG1 and GRB7. Interacts (not phosphorylated) with PTK2/FAK1 (via FERM domain). Extracellular cell-membrane anchored RET cadherin fragments form complex in neurons with reduced trophic status, preferentially at the contact sites between somas. Interacts with AIP in the pituitary gland; this interaction prevents the formation of the AIP-survivin complex. Interacts (inactive) with CBLC and CD2AP; dissociates upon activation by GDNF which increases CBLC:CD2AP interaction. Ca(2+) is required as a cofactor. Autophosphorylated on C-terminal tyrosine residues upon ligand stimulation. Post-translationally, proteolytically cleaved by caspase-3. The soluble RET kinase fragment is able to induce cell death. The extracellular cell-membrane anchored RET cadherin fragment accelerates cell adhesion in sympathetic neurons.

Its subcellular location is the cell membrane. The protein localises to the endosome membrane. It carries out the reaction L-tyrosyl-[protein] + ATP = O-phospho-L-tyrosyl-[protein] + ADP + H(+). Its activity is regulated as follows. Repressed by 4-(3-hydroxyanilino)-quinolines derivatives, indolin-2-one-derivatives, 2-(alkylsulfanyl)-4-(3-thienyl) nicotinonitrile analogs, 3- and 4-substituted beta-carbolin-1-ones, vandetanib, motesanib, sorafenib (BAY 43-9006), cabozantinib (XL184), lenvatinib, sunitinib, nintedanib, and withaferin A (WA). Inactivation by sorafenib both reduces kinase activity and promotes lysosomal degradation. In terms of biological role, receptor tyrosine-protein kinase involved in numerous cellular mechanisms including cell proliferation, neuronal navigation, cell migration, and cell differentiation in response to glia cell line-derived growth family factors (GDNF, NRTN, ARTN, PSPN and GDF15). In contrast to most receptor tyrosine kinases, RET requires not only its cognate ligands but also coreceptors, for activation. GDNF ligands (GDNF, NRTN, ARTN, PSPN and GDF15) first bind their corresponding GDNFR coreceptors (GFRA1, GFRA2, GFRA3, GFRA4 and GFRAL, respectively), triggering RET autophosphorylation and activation, leading to activation of downstream signaling pathways, including the MAPK- and AKT-signaling pathways. Acts as a dependence receptor via the GDNF-GFRA1 signaling: in the presence of the ligand GDNF in somatotrophs within pituitary, promotes survival and down regulates growth hormone (GH) production, but triggers apoptosis in absence of GDNF. Required for the molecular mechanisms orchestration during intestine organogenesis via the ARTN-GFRA3 signaling: involved in the development of enteric nervous system and renal organogenesis during embryonic life, and promotes the formation of Peyer's patch-like structures, a major component of the gut-associated lymphoid tissue. Mediates, through interaction with GDF15-receptor GFRAL, GDF15-induced cell-signaling in the brainstem which triggers an aversive response, characterized by nausea, vomiting, and/or loss of appetite in response to various stresses. Modulates cell adhesion via its cleavage by caspase in sympathetic neurons and mediates cell migration in an integrin (e.g. ITGB1 and ITGB3)-dependent manner. Also active in the absence of ligand, triggering apoptosis through a mechanism that requires receptor intracellular caspase cleavage. Triggers the differentiation of rapidly adapting (RA) mechanoreceptors. Involved in the development of the neural crest. Regulates nociceptor survival and size. Phosphorylates PTK2/FAK1. Its function is as follows. Isoform 1 in complex with GFRAL induces higher activation of MAPK-signaling pathway than isoform 2 in complex with GFRAL. The sequence is that of Proto-oncogene tyrosine-protein kinase receptor Ret from Homo sapiens (Human).